The sequence spans 780 residues: Gelsolin (780 aa).

The first 25 residues, 1–25 (MAPYCSSLRSALLVLALCALSPSHA), serve as a signal peptide directing secretion. The tract at residues 28 to 48 (ASRGRAQERAPQSRVSETRPS) is disordered. Positions 51–174 (VVEHPEFLKA…YKKGGVASGF (124 aa)) are actin-severing. The Gelsolin-like 1 repeat unit spans residues 74 to 155 (FDLVPVPPNL…EVQGFESSTF (82 aa)). Residue Tyr84 is modified to Phosphotyrosine. Gly90, Asp91, Glu122, Asp134, Gly139, and Ala141 together coordinate Ca(2+). The actin-actin interfilament contact point stretch occupies residues 121–124 (DESG). A 1,2-diacyl-sn-glycero-3-phospho-(1D-myo-inositol-4,5-bisphosphate) is bound at residue 160–167 (KSGLKYKK). Position 170 (Val170) interacts with Ca(2+). Position 186-194 (186-194 (RLFQVKGRR)) interacts with a 1,2-diacyl-sn-glycero-3-phospho-(1D-myo-inositol-4,5-bisphosphate). The stretch at 196–268 (VRATEVPVSW…SEEGSEPEAM (73 aa)) is one Gelsolin-like 2 repeat. Residues Gly211 and Asp212 each contribute to the Ca(2+) site. An intrachain disulfide couples Cys213 to Cys226. 5 residues coordinate Ca(2+): Glu234, Asp284, Glu327, Asp328, and Glu352. Residues 244–286 (GIRDNERSGRAQVHVSEEGSEPEAMLQVLGPKPDLPQGTEDTA) are disordered. The Gelsolin-like 3 repeat unit spans residues 315-387 (DENPFAQSAL…LPEGGETPLF (73 aa)). A phosphotyrosine mark is found at Tyr407 and Tyr463. The actin-binding, Ca-sensitive stretch occupies residues 432–780 (AAQHGMDDDG…LDRALAELAA (349 aa)). The stretch at 453–534 (SNKVLVDPAT…VQGKEPAHLM (82 aa)) is one Gelsolin-like 4 repeat. Residues Gly469, Asp470, Glu500, Asp512, Gly517, Pro519, and Thr549 each contribute to the Ca(2+) site. The stretch at 576–640 (AVEVMPKAGA…EEGSEPDGFW (65 aa)) is one Gelsolin-like 5 repeat. N6-acetyllysine is present on Lys582. Residues Asn589 and Asp590 each contribute to the Ca(2+) site. A Phosphotyrosine modification is found at Tyr601. Position 612 (Glu612) interacts with Ca(2+). Tyr649 is subject to Phosphotyrosine. One copy of the Gelsolin-like 6 repeat lies at 679-754 (IEEVPGELMQ…VRQGFEPPSF (76 aa)). 3 residues coordinate Ca(2+): Asp694, Asp695, and Glu717. A Phosphothreonine modification is found at Thr740.

It belongs to the villin/gelsolin family. As to quaternary structure, binds to actin and to fibronectin. Identified in a complex composed of ACTA1, COBL, GSN and TMSB4X. Interacts with the inactive form of EIF2AK2/PKR. Interacts with FLII. Post-translationally, phosphorylated on tyrosine residues in vitro.

The protein localises to the secreted. It is found in the cytoplasm. Its subcellular location is the cytoskeleton. In terms of biological role, calcium-regulated, actin-modulating protein that binds to the plus (or barbed) ends of actin monomers or filaments, preventing monomer exchange (end-blocking or capping). It can promote the assembly of monomers into filaments (nucleation) as well as sever filaments already formed. Plays a role in ciliogenesis. This Rattus norvegicus (Rat) protein is Gelsolin (Gsn).